Here is an 89-residue protein sequence, read N- to C-terminus: Large ribosomal subunit protein bL28 (89 aa).

The protein belongs to the bacterial ribosomal protein bL28 family.

The sequence is that of Large ribosomal subunit protein bL28 from Chlamydia abortus (strain DSM 27085 / S26/3) (Chlamydophila abortus).